Reading from the N-terminus, the 377-residue chain is Transmembrane 6 superfamily member 2 (377 aa).

9 helical membrane passes run 10 to 30 (IAAL…VSAL), 34 to 54 (LWVA…VYSL), 63 to 83 (PLYA…IIAL), 111 to 131 (FICY…AGAI), 140 to 160 (FGLY…TGNI), 170 to 190 (PAFF…MKVF), 219 to 239 (LALV…GLVV), 269 to 289 (MLMY…ALTF), and 332 to 352 (TWGC…LLAY). EXPERA domains follow at residues 61-186 (YDPL…CWAG) and 217-351 (ADLA…HLLA).

Belongs to the TM6SF family. In terms of tissue distribution, substantial expression in liver and intestine, whereas all other tissues analyzed show low levels.

The protein resides in the endoplasmic reticulum membrane. It is found in the endoplasmic reticulum-Golgi intermediate compartment membrane. Regulator of liver fat metabolism influencing triglyceride secretion and hepatic lipid droplet content. May function as sterol isomerase. The protein is Transmembrane 6 superfamily member 2 (TM6SF2) of Homo sapiens (Human).